Here is a 173-residue protein sequence, read N- to C-terminus: Placenta-specific protein 1 (173 aa).

Positions 1 to 23 are cleaved as a signal peptide; sequence MNLRKFLGGTVLVAFMLFSYSEQ.

It belongs to the PLAC1 family. Expressed in placenta.

It is found in the secreted. Functionally, may play a role in placental development. The protein is Placenta-specific protein 1 of Mus musculus (Mouse).